We begin with the raw amino-acid sequence, 313 residues long: Probable myosin light chain kinase DDB_G0292624 (313 aa).

Residues 6–264 (YELHKEIGKG…AKQALEHPWI (259 aa)) enclose the Protein kinase domain. Residues 12-20 (IGKGAFSVV) and K35 each bind ATP. The active-site Proton acceptor is D125.

Belongs to the protein kinase superfamily. CAMK Ser/Thr protein kinase family. CaMK subfamily.

The enzyme catalyses L-seryl-[myosin light chain] + ATP = O-phospho-L-seryl-[myosin light chain] + ADP + H(+). The catalysed reaction is L-threonyl-[myosin light chain] + ATP = O-phospho-L-threonyl-[myosin light chain] + ADP + H(+). Its activity is regulated as follows. Does not have a calmodulin-binding domain. Functionally, may phosphorylate a specific serine in the N-terminus of a myosin light chain. The chain is Probable myosin light chain kinase DDB_G0292624 from Dictyostelium discoideum (Social amoeba).